A 69-amino-acid polypeptide reads, in one-letter code: UPF0270 protein VCM66_2532 (69 aa).

This sequence belongs to the UPF0270 family.

This chain is UPF0270 protein VCM66_2532, found in Vibrio cholerae serotype O1 (strain M66-2).